Here is a 166-residue protein sequence, read N- to C-terminus: Small ribosomal subunit protein uS5 (166 aa).

The S5 DRBM domain occupies 11–74 (LQEKLIAVNR…EKARRNMMNV (64 aa)).

The protein belongs to the universal ribosomal protein uS5 family. In terms of assembly, part of the 30S ribosomal subunit. Contacts proteins S4 and S8.

Functionally, with S4 and S12 plays an important role in translational accuracy. In terms of biological role, located at the back of the 30S subunit body where it stabilizes the conformation of the head with respect to the body. This is Small ribosomal subunit protein uS5 from Buchnera aphidicola subsp. Acyrthosiphon kondoi (Acyrthosiphon kondoi symbiotic bacterium).